We begin with the raw amino-acid sequence, 64 residues long: Large ribosomal subunit protein bL35c (64 aa).

It belongs to the bacterial ribosomal protein bL35 family.

Its subcellular location is the plastid. It localises to the chloroplast. This Phaeodactylum tricornutum (strain CCAP 1055/1) protein is Large ribosomal subunit protein bL35c.